The chain runs to 628 residues: DEAD-box ATP-dependent RNA helicase 9 (628 aa).

Positions 98–126 (LEVAKLGISPKIVSQLASRGITKLFPIQR) match the Q motif motif. One can recognise a Helicase ATP-binding domain in the interval 129 to 302 (LEPAMQGKDM…QKYLKNPVTI (174 aa)). 142-149 (AKTGTGKT) is a binding site for ATP. The DEAD box signature appears at 250-253 (DEAD). The 148-residue stretch at 331–478 (VLGELIKEHA…KINVEGSDLM (148 aa)) folds into the Helicase C-terminal domain. Disordered regions lie at residues 496 to 548 (GSYG…SGFG) and 571 to 628 (SGFG…FGSS). Low complexity predominate over residues 500-509 (RRGSFGSSSS). Residues 510–548 (RGGGFGDSGFGRSGGGFGRSGGGGFGRSSGGGFGDSGFG) are compositionally biased toward gly residues.

The protein belongs to the DEAD box helicase family. DDX21/DDX50 subfamily.

The catalysed reaction is ATP + H2O = ADP + phosphate + H(+). This Oryza sativa subsp. japonica (Rice) protein is DEAD-box ATP-dependent RNA helicase 9.